The primary structure comprises 65 residues: Large ribosomal subunit protein bL35 (65 aa).

The segment at 1–65 is disordered; it reads MQKIKTNRSA…KELKRLLPGM (65 aa). Basic residues-rich tracts occupy residues 10-19 and 33-47; these read AAKRFKRTKS and LTKKNRKRKRSLRKS. Residues 54-65 are compositionally biased toward basic and acidic residues; the sequence is NNKELKRLLPGM.

Belongs to the bacterial ribosomal protein bL35 family.

The polypeptide is Large ribosomal subunit protein bL35 (Desulfosudis oleivorans (strain DSM 6200 / JCM 39069 / Hxd3) (Desulfococcus oleovorans)).